Reading from the N-terminus, the 79-residue chain is Translational regulator CsrA (79 aa).

The protein belongs to the CsrA/RsmA family. As to quaternary structure, homodimer; the beta-strands of each monomer intercalate to form a hydrophobic core, while the alpha-helices form wings that extend away from the core.

The protein localises to the cytoplasm. A translational regulator that binds mRNA to regulate translation initiation and/or mRNA stability. Usually binds in the 5'-UTR at or near the Shine-Dalgarno sequence preventing ribosome-binding, thus repressing translation. Its main target seems to be the major flagellin gene, while its function is anatagonized by FliW. The chain is Translational regulator CsrA from Geobacter sulfurreducens (strain ATCC 51573 / DSM 12127 / PCA).